A 275-amino-acid polypeptide reads, in one-letter code: Membrane protein insertase YidC 2 (275 aa).

The N-terminal stretch at 1 to 21 (MKKKNIILISVLLGALLLLTG) is a signal peptide. Cys-22 is lipidated: N-palmitoyl cysteine. The S-diacylglycerol cysteine moiety is linked to residue Cys-22. 4 consecutive transmembrane segments (helical) span residues 48-68 (FVAK…TLLI), 133-153 (QMGC…YYAI), 174-194 (MVLA…SMIG), and 212-232 (IMIL…WAVG).

This sequence belongs to the OXA1/ALB3/YidC family. Type 2 subfamily.

The protein resides in the cell membrane. Functionally, required for the insertion and/or proper folding and/or complex formation of integral membrane proteins into the membrane. Involved in integration of membrane proteins that insert both dependently and independently of the Sec translocase complex, as well as at least some lipoproteins. This Listeria monocytogenes serotype 4b (strain F2365) protein is Membrane protein insertase YidC 2.